The sequence spans 266 residues: Exosome complex component Rrp42 (266 aa).

This sequence belongs to the RNase PH family. Rrp42 subfamily. Component of the archaeal exosome complex. Forms a hexameric ring-like arrangement composed of 3 Rrp41-Rrp42 heterodimers. The hexameric ring associates with a trimer of Rrp4 and/or Csl4 subunits.

It is found in the cytoplasm. In terms of biological role, non-catalytic component of the exosome, which is a complex involved in RNA degradation. Contributes to the structuring of the Rrp41 active site. In Methanosarcina mazei (strain ATCC BAA-159 / DSM 3647 / Goe1 / Go1 / JCM 11833 / OCM 88) (Methanosarcina frisia), this protein is Exosome complex component Rrp42.